A 260-amino-acid polypeptide reads, in one-letter code: Hydroxyethylthiazole kinase (260 aa).

Residues R126 and S172 each coordinate ATP. G199 lines the substrate pocket.

It belongs to the Thz kinase family. Mg(2+) serves as cofactor.

The catalysed reaction is 5-(2-hydroxyethyl)-4-methylthiazole + ATP = 4-methyl-5-(2-phosphooxyethyl)-thiazole + ADP + H(+). Its pathway is cofactor biosynthesis; thiamine diphosphate biosynthesis; 4-methyl-5-(2-phosphoethyl)-thiazole from 5-(2-hydroxyethyl)-4-methylthiazole: step 1/1. In terms of biological role, catalyzes the phosphorylation of the hydroxyl group of 4-methyl-5-beta-hydroxyethylthiazole (THZ). In Burkholderia thailandensis (strain ATCC 700388 / DSM 13276 / CCUG 48851 / CIP 106301 / E264), this protein is Hydroxyethylthiazole kinase.